We begin with the raw amino-acid sequence, 98 residues long: Protein translation factor SUI1 homolog (98 aa).

Belongs to the SUI1 family.

In Pyrococcus furiosus (strain ATCC 43587 / DSM 3638 / JCM 8422 / Vc1), this protein is Protein translation factor SUI1 homolog.